Reading from the N-terminus, the 321-residue chain is Glucokinase (321 aa).

8 to 13 (GDVGGT) is an ATP binding site.

It belongs to the bacterial glucokinase family.

Its subcellular location is the cytoplasm. It carries out the reaction D-glucose + ATP = D-glucose 6-phosphate + ADP + H(+). This chain is Glucokinase, found in Tolumonas auensis (strain DSM 9187 / NBRC 110442 / TA 4).